Consider the following 302-residue polypeptide: UDP-3-O-acyl-N-acetylglucosamine deacetylase (302 aa).

Positions 82, 238, and 242 each coordinate Zn(2+). The active-site Proton donor is His-265.

It belongs to the LpxC family. Zn(2+) is required as a cofactor.

It carries out the reaction a UDP-3-O-[(3R)-3-hydroxyacyl]-N-acetyl-alpha-D-glucosamine + H2O = a UDP-3-O-[(3R)-3-hydroxyacyl]-alpha-D-glucosamine + acetate. It participates in glycolipid biosynthesis; lipid IV(A) biosynthesis; lipid IV(A) from (3R)-3-hydroxytetradecanoyl-[acyl-carrier-protein] and UDP-N-acetyl-alpha-D-glucosamine: step 2/6. Catalyzes the hydrolysis of UDP-3-O-myristoyl-N-acetylglucosamine to form UDP-3-O-myristoylglucosamine and acetate, the committed step in lipid A biosynthesis. This chain is UDP-3-O-acyl-N-acetylglucosamine deacetylase, found in Leptospira biflexa serovar Patoc (strain Patoc 1 / Ames).